A 180-amino-acid polypeptide reads, in one-letter code: MARLKEKYLQEIRKALQAKFGYKNIMEIPKLEKIVINMGVSEATQNPKAIDNAVQDLMTITGQKPVVTKAKKSIAAFKLRQGTSIGCKVTLRGDRMYEFLDRLINVALPRVRDFHGVSPNSFDGRGNYTLGIREQLIFPEIEYDKIDKVRGMDIVMVTTAKSDEEARELLRGFGMPFREH.

Belongs to the universal ribosomal protein uL5 family. Part of the 50S ribosomal subunit; part of the 5S rRNA/L5/L18/L25 subcomplex. Contacts the 5S rRNA and the P site tRNA. Forms a bridge to the 30S subunit in the 70S ribosome.

In terms of biological role, this is one of the proteins that bind and probably mediate the attachment of the 5S RNA into the large ribosomal subunit, where it forms part of the central protuberance. In the 70S ribosome it contacts protein S13 of the 30S subunit (bridge B1b), connecting the 2 subunits; this bridge is implicated in subunit movement. Contacts the P site tRNA; the 5S rRNA and some of its associated proteins might help stabilize positioning of ribosome-bound tRNAs. The chain is Large ribosomal subunit protein uL5 from Moorella thermoacetica (strain ATCC 39073 / JCM 9320).